A 471-amino-acid chain; its full sequence is Ribosomal protein uS12 methylthiotransferase RimO (471 aa).

An MTTase N-terminal domain is found at 23-138 (PKIGFVSLGC…VMDAVHVHVP (116 aa)). Residues Cys32, Cys68, Cys97, Cys169, Cys173, and Cys176 each contribute to the [4Fe-4S] cluster site. In terms of domain architecture, Radical SAM core spans 155-396 (LTPRHYAYLK…MAVAEAVSAE (242 aa)). The 73-residue stretch at 399 to 471 (RERVGAEMQV…QGHDLVGQPL (73 aa)) folds into the TRAM domain.

This sequence belongs to the methylthiotransferase family. RimO subfamily. [4Fe-4S] cluster serves as cofactor.

The protein resides in the cytoplasm. The enzyme catalyses L-aspartate(89)-[ribosomal protein uS12]-hydrogen + (sulfur carrier)-SH + AH2 + 2 S-adenosyl-L-methionine = 3-methylsulfanyl-L-aspartate(89)-[ribosomal protein uS12]-hydrogen + (sulfur carrier)-H + 5'-deoxyadenosine + L-methionine + A + S-adenosyl-L-homocysteine + 2 H(+). In terms of biological role, catalyzes the methylthiolation of an aspartic acid residue of ribosomal protein uS12. The chain is Ribosomal protein uS12 methylthiotransferase RimO from Methylibium petroleiphilum (strain ATCC BAA-1232 / LMG 22953 / PM1).